The sequence spans 460 residues: Probable lipid II flippase MurJ (460 aa).

The next 11 helical transmembrane spans lie at 4–24 (ILGA…PNLF), 50–70 (FASL…LLVA), 95–115 (IVAI…LGAL), 122–142 (FFAS…ALLI), 155–175 (LSYG…YPLV), 228–248 (IASF…VSYL), 257–277 (LPLA…IAIA), 292–312 (KAWF…IMLS), 336–356 (VFSL…FSLW), 366–386 (AAKI…SLMP), and 428–448 (LVIL…KSWV).

This sequence belongs to the MurJ/MviN family.

It localises to the cell inner membrane. The protein operates within cell wall biogenesis; peptidoglycan biosynthesis. In terms of biological role, involved in peptidoglycan biosynthesis. Transports lipid-linked peptidoglycan precursors from the inner to the outer leaflet of the cytoplasmic membrane. This chain is Probable lipid II flippase MurJ, found in Helicobacter pylori (strain J99 / ATCC 700824) (Campylobacter pylori J99).